The sequence spans 176 residues: O-acetyl-ADP-ribose deacetylase (176 aa).

Positions 1–175 (MSGRINVVQG…LYQRLLGQYD (175 aa)) constitute a Macro domain. Substrate contacts are provided by residues 11–12 (DI), Asn-25, 33–35 (GVD), and 122–126 (STGIY). Asp-35 acts as the Proton acceptor in catalysis.

This sequence belongs to the MacroD-type family. YmdB subfamily. Homodimer. Interacts with RNase III.

The catalysed reaction is 3''-O-acetyl-ADP-D-ribose + H2O = ADP-D-ribose + acetate + H(+). The enzyme catalyses 2''-O-acetyl-ADP-D-ribose + H2O = ADP-D-ribose + acetate + H(+). Its function is as follows. Deacetylates O-acetyl-ADP ribose to yield ADP-ribose and free acetate. Down-regulates ribonuclease 3 (RNase III) activity. Acts by interacting directly with the region of the ribonuclease that is required for dimerization/activation. The chain is O-acetyl-ADP-ribose deacetylase from Cronobacter turicensis (strain DSM 18703 / CCUG 55852 / LMG 23827 / z3032).